The sequence spans 165 residues: Large ribosomal subunit protein uL11 (165 aa).

This sequence belongs to the universal ribosomal protein uL11 family. As to quaternary structure, part of the ribosomal stalk of the 50S ribosomal subunit. Interacts with L10 and the large rRNA to form the base of the stalk. L10 forms an elongated spine to which L12 dimers bind in a sequential fashion forming a multimeric L10(L12)X complex.

Its function is as follows. Forms part of the ribosomal stalk which helps the ribosome interact with GTP-bound translation factors. The chain is Large ribosomal subunit protein uL11 from Thermococcus kodakarensis (strain ATCC BAA-918 / JCM 12380 / KOD1) (Pyrococcus kodakaraensis (strain KOD1)).